The primary structure comprises 287 residues: Large ribosomal subunit protein uL2 (287 aa).

Disordered regions lie at residues 1–30 and 211–287; these read MGIR…DQPE and NRWK…GRQS. Positions 12 to 22 are enriched in polar residues; it reads GTRQKSVSDFS. Basic residues-rich tracts occupy residues 211–220 and 258–287; these read NRWKGRRPKV and KTRK…GRQS.

It belongs to the universal ribosomal protein uL2 family. In terms of assembly, part of the 50S ribosomal subunit. Forms a bridge to the 30S subunit in the 70S ribosome.

One of the primary rRNA binding proteins. Required for association of the 30S and 50S subunits to form the 70S ribosome, for tRNA binding and peptide bond formation. It has been suggested to have peptidyltransferase activity; this is somewhat controversial. Makes several contacts with the 16S rRNA in the 70S ribosome. The protein is Large ribosomal subunit protein uL2 of Cyanothece sp. (strain PCC 7425 / ATCC 29141).